Consider the following 282-residue polypeptide: Pyridoxal 5'-phosphate synthase subunit PdxS (282 aa).

Aspartate 14 is a D-ribose 5-phosphate binding site. Lysine 71 functions as the Schiff-base intermediate with D-ribose 5-phosphate in the catalytic mechanism. Position 143 (glycine 143) interacts with D-ribose 5-phosphate. Arginine 155 contributes to the D-glyceraldehyde 3-phosphate binding site. Residues glycine 204 and 225–226 (GS) contribute to the D-ribose 5-phosphate site.

The protein belongs to the PdxS/SNZ family. In terms of assembly, in the presence of PdxT, forms a dodecamer of heterodimers.

It catalyses the reaction aldehydo-D-ribose 5-phosphate + D-glyceraldehyde 3-phosphate + L-glutamine = pyridoxal 5'-phosphate + L-glutamate + phosphate + 3 H2O + H(+). It functions in the pathway cofactor biosynthesis; pyridoxal 5'-phosphate biosynthesis. Functionally, catalyzes the formation of pyridoxal 5'-phosphate from ribose 5-phosphate (RBP), glyceraldehyde 3-phosphate (G3P) and ammonia. The ammonia is provided by the PdxT subunit. Can also use ribulose 5-phosphate and dihydroxyacetone phosphate as substrates, resulting from enzyme-catalyzed isomerization of RBP and G3P, respectively. In Treponema denticola (strain ATCC 35405 / DSM 14222 / CIP 103919 / JCM 8153 / KCTC 15104), this protein is Pyridoxal 5'-phosphate synthase subunit PdxS.